A 520-amino-acid polypeptide reads, in one-letter code: 4-hydroxyphenylacetate 3-monooxygenase oxygenase component (520 aa).

It belongs to the FADH(2)-utilizing monooxygenase family. In terms of assembly, 4-HPA 3-monooxygenase consists of a reductase component HpaC and an oxygenase component HpaB.

The catalysed reaction is 4-hydroxyphenylacetate + FADH2 + O2 = 3,4-dihydroxyphenylacetate + FAD + H2O + H(+). It functions in the pathway aromatic compound metabolism; 4-hydroxyphenylacetate degradation; pyruvate and succinate semialdehyde from 4-hydroxyphenylacetate: step 1/7. In terms of biological role, utilizes FADH(2) supplied by HpaC or by another flavin reductase, to catalyze the hydroxylation of 4-hydroxyphenylacetic acid, leading to the production of 3,4-DHPA. Can also oxidize phenol to catechol, and hydroxylate other phenol derivatives. This Escherichia coli protein is 4-hydroxyphenylacetate 3-monooxygenase oxygenase component (hpaB).